Reading from the N-terminus, the 290-residue chain is Sodium/potassium-transporting ATPase subunit beta-2 (290 aa).

At 1–39 the chain is on the cytoplasmic side; that stretch reads MVIQKEKKSCGQVVEEWKEFVWNPRTHQFMGRTGTSWAF. Residues 40–67 form a helical; Signal-anchor for type II membrane protein membrane-spanning segment; that stretch reads ILLFYLVFYGFLTAMFTLTMWVMLQTVS. The Extracellular segment spans residues 68–290; it reads DHTPKYQDRL…VAFKLRINKT (223 aa). Residues N96 and N118 are each glycosylated (N-linked (GlcNAc...) asparagine). C129 and C150 are joined by a disulfide. N153 carries N-linked (GlcNAc...) asparagine glycosylation. Cysteines 160 and 177 form a disulfide. Residues N193, N197, and N238 are each glycosylated (N-linked (GlcNAc...) asparagine). The segment at 193-289 is immunoglobulin-like; sequence NQSMNVTCVG…RVAFKLRINK (97 aa). C200 and C261 form a disulfide bridge.

The protein belongs to the X(+)/potassium ATPases subunit beta family. As to quaternary structure, the sodium/potassium-transporting ATPase is composed of a catalytic alpha subunit, an auxiliary non-catalytic beta subunit and an additional regulatory subunit. Interacts with BSG.

It localises to the cell membrane. Its function is as follows. This is the non-catalytic component of the active enzyme, which catalyzes the hydrolysis of ATP coupled with the exchange of Na(+) and K(+) ions across the plasma membrane. The exact function of the beta-2 subunit is not known. Mediates cell adhesion of neurons and astrocytes, and promotes neurite outgrowth. The protein is Sodium/potassium-transporting ATPase subunit beta-2 (ATP1B2) of Bos taurus (Bovine).